Here is a 166-residue protein sequence, read N- to C-terminus: Eukaryotic translation initiation factor 5A (166 aa).

Residues 1 to 21 (MSDEDHDFSHQGGGDNASKTY) form a disordered region. At K53 the chain carries Hypusine. The tract at residues 101–121 (EDPSLPSHLSLMDDEGESRED) is disordered. Acidic residues predominate over residues 112–121 (MDDEGESRED).

This sequence belongs to the eIF-5A family. Post-translationally, lys-53 undergoes hypusination, a unique post-translational modification that consists in the addition of a butylamino group from spermidine to lysine side chain, leading to the formation of the unusual amino acid hypusine. eIF-5As are the only known proteins to undergo this modification, which is essential for their function.

The protein resides in the cytoplasm. Functionally, translation factor that promotes translation elongation and termination, particularly upon ribosome stalling at specific amino acid sequence contexts. Binds between the exit (E) and peptidyl (P) site of the ribosome and promotes rescue of stalled ribosome: specifically required for efficient translation of polyproline-containing peptides as well as other motifs that stall the ribosome. Acts as a ribosome quality control (RQC) cofactor by joining the RQC complex to facilitate peptidyl transfer during CAT tailing step. The sequence is that of Eukaryotic translation initiation factor 5A from Leishmania donovani.